The following is an 88-amino-acid chain: Putative membrane protein insertion efficiency factor (88 aa).

The disordered stretch occupies residues 68–88 (VPPPNSDTRARGEADARSHRL). Residues 75–88 (TRARGEADARSHRL) are compositionally biased toward basic and acidic residues.

It belongs to the UPF0161 family.

The protein localises to the cell inner membrane. In terms of biological role, could be involved in insertion of integral membrane proteins into the membrane. This is Putative membrane protein insertion efficiency factor from Burkholderia ambifaria (strain MC40-6).